A 259-amino-acid polypeptide reads, in one-letter code: Glucose-1-phosphate thymidylyltransferase (259 aa).

It belongs to the inositol monophosphatase superfamily.

It carries out the reaction dTTP + alpha-D-glucose 1-phosphate + H(+) = dTDP-alpha-D-glucose + diphosphate. It functions in the pathway antibiotic biosynthesis; streptomycin biosynthesis. The chain is Glucose-1-phosphate thymidylyltransferase (strO) from Streptomyces griseus.